A 279-amino-acid chain; its full sequence is MKKSLTVTVSSVLAFLALNNAAHAQQHGTQVKTPVQHNYVSNVQAQTQSPTTYTVVAGDSLYKIALEHHLTLNQLYSYNPGVTPLIFPGDVISLVPQNKVKQTKAVKSPVRKASQAKKVVKQPVQQASKKVVVKQAPKQAVTKTVNVAYKPAQVQKSVPTVPVAHNYNKSVANRGNLYAYGNCTYYAFDRRAQLGRSIGSLWGNANNWNYAAKVAGFKVDKTPEVGAIFQTAAGPYGHVGVVESVNPNGTITVSEMNYAGFNVKSSRTILNPGKYNYIH.

An N-terminal signal peptide occupies residues 1–24; that stretch reads MKKSLTVTVSSVLAFLALNNAAHA. Residues 51-94 form the LysM domain; that stretch reads TTYTVVAGDSLYKIALEHHLTLNQLYSYNPGVTPLIFPGDVISL. Residues 158-279 enclose the Peptidase C51 domain; it reads VPTVPVAHNY…LNPGKYNYIH (122 aa).

It catalyses the reaction Hydrolyzes the link between N-acetylmuramoyl residues and L-amino acid residues in certain cell-wall glycopeptides.. Has weak lytic activity toward S.aureus cells. This is Probable autolysin LDP from Staphylococcus aureus (strain NCTC 8325 / PS 47).